A 156-amino-acid chain; its full sequence is Acyl carrier protein, mitochondrial (156 aa).

The transit peptide at 1 to 68 directs the protein to the mitochondrion; the sequence is MAVRVLCACV…GRVTQLCRQY (68 aa). One can recognise a Carrier domain in the interval 77 to 152; that stretch reads EGIKDRVLYV…EIVDYIADKK (76 aa). N6-acetyllysine is present on Lys88. Residue Ser112 is modified to O-(pantetheine 4'-phosphoryl)serine.

In terms of assembly, mammalian complex I is composed of 45 different subunits. Interacts with ETFRF1. Identified in a complex composed of MALSU1, MIEF1 upstream open reading frame protein and NDUFAB1; within the trimeric complex MIEF1 upstream open reading frame protein functions as a bridging scaffold that interacts with MALSU1 on one side, and with NDUFAB1 on the other side. The complex interacts with the mitochondrial large ribosomal subunit. Interacts with alpha-1-microglobulin chain; this interaction is required for the maintenance of mitochondrial redox homeostasis. Component of the mitochondrial core iron-sulfur cluster (ISC) complex composed of NFS1, LYRM4, NDUFAB1, ISCU, FXN, and FDX2; this complex is a heterohexamer containing two copies of each monomer. Component of the cyteine desulfurase complex composed of NFS1, LYRM4 and NDUFAB1; this complex contributes to the stability and cysteine desulfurase activity of NFS1. Post-translationally, phosphopantetheinylation at Ser-112 is essential for interactions with LYR motif-containing proteins.

Its subcellular location is the mitochondrion. Carrier of the growing fatty acid chain in fatty acid biosynthesis. Accessory and non-catalytic subunit of the mitochondrial membrane respiratory chain NADH dehydrogenase (Complex I), which functions in the transfer of electrons from NADH to the respiratory chain. Accessory protein, of the core iron-sulfur cluster (ISC) assembly complex, that regulates, in association with LYRM4, the stability and the cysteine desulfurase activity of NFS1 and participates in the [2Fe-2S] clusters assembly on the scaffolding protein ISCU. The core iron-sulfur cluster (ISC) assembly complex is involved in the de novo synthesis of a [2Fe-2S] cluster, the first step of the mitochondrial iron-sulfur protein biogenesis. This process is initiated by the cysteine desulfurase complex (NFS1:LYRM4:NDUFAB1) that produces persulfide which is delivered on the scaffold protein ISCU in a FXN-dependent manner. Then this complex is stabilized by FDX2 which provides reducing equivalents to accomplish the [2Fe-2S] cluster assembly. Finally, the [2Fe-2S] cluster is transferred from ISCU to chaperone proteins, including HSCB, HSPA9 and GLRX5. The sequence is that of Acyl carrier protein, mitochondrial from Bos taurus (Bovine).